Here is a 250-residue protein sequence, read N- to C-terminus: uncharacterized protein (250 aa).

Residues Met1–Ala17 form the signal peptide. 4 N-linked (GlcNAc...) asparagine glycosylation sites follow: Asn48, Asn159, Asn223, and Asn239.

It is found in the secreted. This is an uncharacterized protein from Caenorhabditis elegans.